A 178-amino-acid chain; its full sequence is Large ribosomal subunit protein uL6 (178 aa).

Belongs to the universal ribosomal protein uL6 family. As to quaternary structure, part of the 50S ribosomal subunit.

This protein binds to the 23S rRNA, and is important in its secondary structure. It is located near the subunit interface in the base of the L7/L12 stalk, and near the tRNA binding site of the peptidyltransferase center. In Francisella tularensis subsp. novicida (strain U112), this protein is Large ribosomal subunit protein uL6.